The sequence spans 638 residues: CTTNBP2 N-terminal-like protein (638 aa).

The stretch at 87-284 (MKQCKNMQER…KDLEAAQQHR (198 aa)) forms a coiled coil. 4 disordered regions span residues 280–303 (AQQH…TATE), 360–430 (RELT…PCSS), 463–490 (RHKF…LSPT), and 514–621 (NQGP…CSPS). Serine 285 bears the Phosphoserine mark. The span at 360 to 371 (RELTSDSSTENQ) shows a compositional bias: polar residues. Low complexity-rich tracts occupy residues 401–430 (TMPS…PCSS) and 467–477 (QSQADQDQQAS). Residues serine 481, serine 488, serine 522, serine 526, serine 559, serine 562, and serine 567 each carry the phosphoserine modification. Residues 514–528 (NQGPIKPVSPNSSPF) show a composition bias toward polar residues. Residues threonine 569 and threonine 589 each carry the phosphothreonine modification. Positions 589–620 (TPSQSATTPVTKTHSQASSLAATEDLASSCSP) are enriched in polar residues. Serine 591 is subject to Phosphoserine.

Interacts with CTTN/cortactin; this interaction may redistribute CTTN to stress fibers. May form homomers. Associates with the core of STRIPAK complexes composed of PP2A catalytic and scaffolding subunits, the striatins (PP2A regulatory subunits), the striatin-associated proteins MOB4, STRIP1 and STRIP2, PDCD10 and members of the STE20 kinases, such as STK24 and STK26. In terms of tissue distribution, predominantly expressed in skin, also detectable in spleen and lung (at protein level). Very low levels, if any, in brain (at protein level).

It is found in the cell projection. Its subcellular location is the lamellipodium. The protein localises to the cytoplasm. It localises to the cytoskeleton. The protein resides in the stress fiber. Functionally, regulates lamellipodial actin dynamics in a CTTN-dependent manner. Associates with core striatin-interacting phosphatase and kinase (STRIPAK) complex to form CTTNBP2NL-STRIPAK complexes. STRIPAK complexes have critical roles in protein (de)phosphorylation and are regulators of multiple signaling pathways including Hippo, MAPK, nuclear receptor and cytoskeleton remodeling. Different types of STRIPAK complexes are involved in a variety of biological processes such as cell growth, differentiation, apoptosis, metabolism and immune regulation. This is CTTNBP2 N-terminal-like protein (Cttnbp2nl) from Mus musculus (Mouse).